The sequence spans 82 residues: RNA-binding protein TTE2299 (82 aa).

It belongs to the eukaryotic ribosomal protein eL8 family.

This is RNA-binding protein TTE2299 from Caldanaerobacter subterraneus subsp. tengcongensis (strain DSM 15242 / JCM 11007 / NBRC 100824 / MB4) (Thermoanaerobacter tengcongensis).